The chain runs to 600 residues: DNA ligase (600 aa).

Residue Asp-259 participates in ATP binding. Lys-261 (N6-AMP-lysine intermediate) is an active-site residue. Positions 266, 281, 311, 351, 428, and 434 each coordinate ATP.

It belongs to the ATP-dependent DNA ligase family. Requires Mg(2+) as cofactor.

It carries out the reaction ATP + (deoxyribonucleotide)n-3'-hydroxyl + 5'-phospho-(deoxyribonucleotide)m = (deoxyribonucleotide)n+m + AMP + diphosphate.. In terms of biological role, DNA ligase that seals nicks in double-stranded DNA during DNA replication, DNA recombination and DNA repair. The chain is DNA ligase from Acidianus ambivalens (Desulfurolobus ambivalens).